Reading from the N-terminus, the 91-residue chain is Sec-independent protein translocase protein TatAt (91 aa).

Residues 9–29 (FPGLPGGPELLVVLLIVVLLF) traverse the membrane as a helical segment. Residues 48–91 (FQRGREEIEDELQDMTGDDDEDDATSESSADSVSTDSVSTESSN) form a disordered region. Acidic residues predominate over residues 54–72 (EIEDELQDMTGDDDEDDAT). Residues 73–91 (SESSADSVSTDSVSTESSN) show a composition bias toward low complexity.

It belongs to the TatA/E family. Forms a complex with TatC. Cytoplasmic and membrane-bound TatA form high-molecular-weight complexes.

It localises to the cell membrane. The protein localises to the cytoplasm. Functionally, part of the twin-arginine translocation (Tat) system that transports large folded proteins containing a characteristic twin-arginine motif in their signal peptide across membranes. TatA could form the protein-conducting channel of the Tat system. The protein is Sec-independent protein translocase protein TatAt of Haloferax volcanii (strain ATCC 29605 / DSM 3757 / JCM 8879 / NBRC 14742 / NCIMB 2012 / VKM B-1768 / DS2) (Halobacterium volcanii).